The sequence spans 583 residues: Aspartate--tRNA(Asp/Asn) ligase (583 aa).

Residue glutamate 172 participates in L-aspartate binding. Positions 196–199 (QMLK) are aspartate. Residue arginine 218 participates in L-aspartate binding. ATP is bound by residues 218 to 220 (RDE) and glutamine 227. Histidine 446 contacts L-aspartate. Residue glutamate 480 coordinates ATP. Residue arginine 487 coordinates L-aspartate. 532–535 (GLDR) contacts ATP.

Belongs to the class-II aminoacyl-tRNA synthetase family. Type 1 subfamily. In terms of assembly, homodimer.

It is found in the cytoplasm. The catalysed reaction is tRNA(Asx) + L-aspartate + ATP = L-aspartyl-tRNA(Asx) + AMP + diphosphate. Functionally, aspartyl-tRNA synthetase with relaxed tRNA specificity since it is able to aspartylate not only its cognate tRNA(Asp) but also tRNA(Asn). Reaction proceeds in two steps: L-aspartate is first activated by ATP to form Asp-AMP and then transferred to the acceptor end of tRNA(Asp/Asn). The sequence is that of Aspartate--tRNA(Asp/Asn) ligase from Streptococcus mutans serotype c (strain ATCC 700610 / UA159).